A 115-amino-acid polypeptide reads, in one-letter code: Transmembrane protein 218 (115 aa).

3 helical membrane-spanning segments follow: residues 5-25 (VLGV…VLLL), 38-58 (FSIV…LLFP), and 81-101 (YVLL…LLTH).

It belongs to the TMEM218 family. As to quaternary structure, interacts with TMEM67.

Its subcellular location is the membrane. The protein resides in the cell projection. It localises to the cilium. May be involved in ciliary biogenesis or function. In Mus musculus (Mouse), this protein is Transmembrane protein 218 (Tmem218).